A 338-amino-acid polypeptide reads, in one-letter code: HLA class I histocompatibility antigen, alpha chain G (338 aa).

A signal peptide spans 1 to 24 (MVVMAPRTLFLLLSGALTLTETWA). A VL9 epitope region spans residues 3–11 (VMAPRTLFL). The segment at 25-114 (GSHSMRYFSA…LRGYYNQSEA (90 aa)) is alpha-1. The Extracellular segment spans residues 25–308 (GSHSMRYFSA…KQSSLPTIPI (284 aa)). Tyr31, His94, Asn101, and Tyr108 together coordinate a peptide antigen. Asn110 carries N-linked (GlcNAc...) asparagine glycosylation. The tract at residues 115–206 (SSHTLQWMIG…ENGKEMLQRA (92 aa)) is alpha-2. The cysteines at positions 125 and 188 are disulfide-linked. A peptide antigen-binding residues include Ser167, Lys170, Gln179, Arg180, Tyr183, and Tyr195. Positions 207-298 (DPPKTHVTHH…GLPEPLMLRW (92 aa)) are alpha-3. The region spanning 209–299 (PKTHVTHHPV…LPEPLMLRWK (91 aa)) is the Ig-like C1-type domain. Cys227 and Cys283 form a disulfide bridge. Residues 299–308 (KQSSLPTIPI) form a connecting peptide region. A helical transmembrane segment spans residues 309–332 (MGIVAGLVVLAAVVTGAAVAAVLW). Residues 333-338 (RKKSSD) lie on the Cytoplasmic side of the membrane. The short motif at 334 to 336 (KKS) is the ER-retrieval signal element.

Belongs to the MHC class I family. Forms a heterotrimer with B2M and a self-peptide (peptide-bound HLA-G-B2M). HLA-G-B2M complex interacts with components of the antigen processing machinery TAPBP and TAP1-TAP2 complex; this interaction is required for loading of high affinity peptides and heterotrimer translocation to the cell surface. Interacts with CALCR; this interaction is required for appropriate folding. Interacts with COPB1; this interaction mediates the endoplasmic reticulum (ER) retrieval of HLA-G-B2M complexes that bind low affinity peptides. On the cell surface, peptide-bound HLA-G-B2M molecules (referred to as monomers) can form disulfide-linked homomultimers, homodimers and homotrimers. Interacts with KIR2DL4; this interaction is direct. Interacts with LILRB1 and LILRB2 receptors; this interaction is direct. Interacts with CD160; this interactions is direct. Interacts with CD8A homodimer; this interaction is direct and might down-regulate T cell receptor signaling. Isoform 2: Forms a non-disulfide-linked homodimer and interacts with LILRB2. Post-translationally, N-glycosylated. In terms of processing, produced by proteolytic cleavage at the cell surface (shedding) by matrix metalloproteinase MMP2. Expressed in adult eye. Expressed in immune cell subsets including monocytes, myeloid and plasmacytoid dendritic cells and regulatory T cells (Tr1)(at protein level). Secreted by follicular dendritic cell and follicular helper T cells. In terms of tissue distribution, detected in physiological fluids including amniotic fluid and serum. As to expression, expressed in placenta, amniotic membrane, skin, cord blood and peripheral blood mononuclear cells.

The protein localises to the cell membrane. Its subcellular location is the endoplasmic reticulum membrane. The protein resides in the early endosome membrane. It is found in the secreted. It localises to the early endosome. The protein localises to the cell projection. Its subcellular location is the filopodium membrane. Its function is as follows. Non-classical major histocompatibility class Ib molecule involved in immune regulatory processes at the maternal-fetal interface. In complex with B2M/beta-2 microglobulin binds a limited repertoire of nonamer self-peptides derived from intracellular proteins including histones and ribosomal proteins. Peptide-bound HLA-G-B2M complex acts as a ligand for inhibitory/activating KIR2DL4, LILRB1 and LILRB2 receptors on uterine immune cells to promote fetal development while maintaining maternal-fetal tolerance. Upon interaction with KIR2DL4 and LILRB1 receptors on decidual NK cells, it triggers NK cell senescence-associated secretory phenotype as a molecular switch to promote vascular remodeling and fetal growth in early pregnancy. Through interaction with KIR2DL4 receptor on decidual macrophages induces pro-inflammatory cytokine production mainly associated with tissue remodeling. Through interaction with LILRB2 receptor triggers differentiation of type 1 regulatory T cells and myeloid-derived suppressor cells, both of which actively maintain maternal-fetal tolerance. May play a role in balancing tolerance and antiviral-immunity at maternal-fetal interface by keeping in check the effector functions of NK, CD8+ T cells and B cells. Reprograms B cells toward an immune suppressive phenotype via LILRB1. May induce immune activation/suppression via intercellular membrane transfer (trogocytosis), likely enabling interaction with KIR2DL4, which resides mostly in endosomes. Through interaction with the inhibitory receptor CD160 on endothelial cells may control angiogenesis in immune privileged sites. Likely does not bind B2M and presents peptides. Negatively regulates NK cell- and CD8+ T cell-mediated cytotoxicity. In terms of biological role, non-classical major histocompatibility class Ib molecule involved in immune regulatory processes at the maternal-fetal interface. In complex with B2M/beta-2 microglobulin binds a limited repertoire of nonamer self-peptides derived from intracellular proteins including histones and ribosomal proteins. Peptide-bound HLA-G-B2M complex acts as a ligand for inhibitory/activating KIR2DL4, LILRB1 and LILRB2 receptors on uterine immune cells to promote fetal development while maintaining maternal-fetal tolerance. Upon interaction with KIR2DL4 and LILRB1 receptors on decidual NK cells, it triggers NK cell senescence-associated secretory phenotype as a molecular switch to promote vascular remodeling and fetal growth in early pregnancy. Through interaction with KIR2DL4 receptor on decidual macrophages induces pro-inflammatory cytokine production mainly associated with tissue remodeling. Through interaction with LILRB2 receptor triggers differentiation of type 1 regulatory T cells and myeloid-derived suppressor cells, both of which actively maintain maternal-fetal tolerance. Reprograms B cells toward an immune suppressive phenotype via LILRB1. Functionally, likely does not bind B2M and presents peptides. The sequence is that of HLA class I histocompatibility antigen, alpha chain G from Homo sapiens (Human).